The primary structure comprises 146 residues: Large ribosomal subunit protein uL16 (146 aa).

It belongs to the universal ribosomal protein uL16 family. Part of the 50S ribosomal subunit.

Binds 23S rRNA and is also seen to make contacts with the A and possibly P site tRNAs. The chain is Large ribosomal subunit protein uL16 from Lactobacillus acidophilus (strain ATCC 700396 / NCK56 / N2 / NCFM).